Here is a 109-residue protein sequence, read N- to C-terminus: Preprofallaxidin-8 (109 aa).

The signal sequence occupies residues 1-22; that stretch reads MASLKKSLFLVLFLGLLSLSIC. A propeptide spanning residues 23-46 is cleaved from the precursor; that stretch reads EEQKRENEEDAEDENHEEESEEKR. The interval 27-46 is disordered; sequence RENEEDAEDENHEEESEEKR. The segment covering 30 to 42 has biased composition (acidic residues); the sequence is EEDAEDENHEEES. Position 62 is a leucine amide (Leu-62). The propeptide occupies 66 to 70; the sequence is SEEKR. Met-75 carries the post-translational modification Methionine amide. Positions 79–83 are excised as a propeptide; it reads SEEKR. Met-88 is modified (methionine amide). Propeptides lie at residues 92–96 and Ala-108; that span reads SEEKR.

Belongs to the frog skin active peptide (FSAP) family. Brevinin subfamily. Expressed by the skin glands.

The protein localises to the secreted. Fallaxidin-2.1 shows no antibacterial activity against Gram-positive or Gram-negative bacteria. Does not inhibit the formation of NO by neuronal nitric oxide synthase. Has no effect on splenocyte proliferation or smooth muscle contraction. In terms of biological role, fallaxidin-3.2 shows antibacterial activity against the Gram-positive bacteria E.faecalis (MIC=100 uM) and L.lactis (MIC=500 uM). No antibacterial activity against the Gram-positive bacteria B.cereus, L.innocua, M.luteus, S.epidermidis, S.uberis and S.aureus, or the Gram-negative bacteria E.cloacae and E.coli. This is Preprofallaxidin-8 from Litoria fallax (Eastern dwarf tree frog).